Here is a 266-residue protein sequence, read N- to C-terminus: MDLLKRHLAPIVPDAWSAIDEEAKEIFQGHLAGRKLVDFRGPFGWEYAAVNTGELRPIDDTPEDVDMKLRQVQPLAEVRVPFTLDVTELDSVARGATNPDLDDVARAAERMVEAEDSAIFHGWAQAGIKGIVDSTPHEALAVASVSDFPRAVLSAADTLRKAGVTGPYALVLGPKAYDDLFAATQDGYPVAKQVQRLVVDGPLVRANALAGALVMSMRGGDYELTVGQDLSIGYAFHDRSKVELFVAESFTFRVLEPGAAVHLRYA.

The protein belongs to the encapsulin family. Family 1 subfamily. This encapsulin nanocompartment is formed by 60 subunits; monomers form 12 pentamers which assemble to form shells. Shells are loaded with 4 encapsulated ferritin-like protein decamers (EncFtn) in a tetrahedral arrangement. A 3 nm gap is consistently seen between the shell and the cargo.

Its subcellular location is the encapsulin nanocompartment. Functionally, shell component of a type 1 encapsulin nanocompartment. Assembles into proteinaceous shells about 21 nm in diameter. Small pores form at, or close to, the 2-, 3-, and 5-fold symmetry axes. Data analysis suggests the 5-fold pores open and close with maximal and minimal aperatures of 15 and 5 Angstroms. Cargo protein Fer (ferritin-like protein, probably stores iron) is targeted to the interior via its C-terminal extension; empty intact shells can be isolated in the absence of cargo protein. In Haliangium ochraceum (strain DSM 14365 / JCM 11303 / SMP-2), this protein is Type 1 encapsulin shell protein.